A 307-amino-acid polypeptide reads, in one-letter code: MIILGIETSHDDSSIAILEDGKVLNMWSISQIDIFKKYGGTIPEIASREHVKNIAILQNFLQEFIDLNKIDHIAYTSEPGLIGCLQVGFLFASALSIALNKPLIKINHLDGHFFSGAIDNKEIKYPALGLIVSGGHSQIIYAKNKFDFQIVGETLDDAIGECYDKVSSRLNLGFPGGPIIDKIHASYKGKYLKLTKPKTSGEFDFSFSGIKTQVLNAFNNKKYESIEQIAASFQEVAINYLIEKFKLAIDKFKPESILLGGGVSANKYLREKFKDLHKNTIFPEIKYATDNGAMIAMCAYLRMKKNS.

Residues His-108 and His-112 each coordinate Fe cation. Residues 131–135, Asp-164, Gly-177, Asp-181, and Asn-266 each bind substrate; that span reads IVSGG. Residue Asp-290 coordinates Fe cation.

It belongs to the KAE1 / TsaD family. Fe(2+) is required as a cofactor.

The protein resides in the cytoplasm. The catalysed reaction is L-threonylcarbamoyladenylate + adenosine(37) in tRNA = N(6)-L-threonylcarbamoyladenosine(37) in tRNA + AMP + H(+). Functionally, required for the formation of a threonylcarbamoyl group on adenosine at position 37 (t(6)A37) in tRNAs that read codons beginning with adenine. Is involved in the transfer of the threonylcarbamoyl moiety of threonylcarbamoyl-AMP (TC-AMP) to the N6 group of A37, together with TsaE and TsaB. TsaD likely plays a direct catalytic role in this reaction. This Mycoplasmopsis synoviae (strain 53) (Mycoplasma synoviae) protein is tRNA N6-adenosine threonylcarbamoyltransferase.